The chain runs to 220 residues: Iron-sulfur cluster repair protein YtfE (220 aa).

Belongs to the RIC family. YtfE subfamily. In terms of assembly, homodimer.

Its subcellular location is the cytoplasm. Functionally, di-iron-containing protein involved in the repair of iron-sulfur clusters damaged by oxidative and nitrosative stress conditions. The protein is Iron-sulfur cluster repair protein YtfE of Citrobacter koseri (strain ATCC BAA-895 / CDC 4225-83 / SGSC4696).